We begin with the raw amino-acid sequence, 1518 residues long: Putative cellulose synthase 2 (1518 aa).

Positions 1–731 (MYGTWFTTGK…EEKLEKQSFV (731 aa)) are catalytic. 3 consecutive transmembrane segments (helical) span residues 24 to 44 (PVWV…SVRI), 71 to 91 (ITVF…VWRL), and 105 to 125 (LAVL…LSYF). Residues 144–237 (QWPSVDVFVP…FAVIFDCDHV (94 aa)) are catalytic subdomain A. Residue Asp186 is part of the active site. 2 residues coordinate substrate: Asp233 and Asp235. A catalytic subdomain B region spans residues 314–374 (EAVMGIGGFA…GQRVRWARGM (61 aa)). Asp330 is an active-site residue. The next 5 membrane-spanning stretches (helical) occupy residues 404 to 424 (FLFA…LFLG), 427 to 447 (IIAA…FHSV), 465 to 485 (IYET…LLQP), 514 to 534 (ILAG…VWQF), and 543 to 563 (FILN…SIAV). The PilZ domain occupies 569–668 (QTRNAPRVSV…ERQVVSMVFG (100 aa)). Positions 732 to 1518 (LKPVPRSARH…IARDDLTGEL (787 aa)) are cyclic di-GMP binding domain. Residues 765-785 (APSPDQSGVTAETPFGDSNTG) form a disordered region. Over residues 768 to 785 (PDQSGVTAETPFGDSNTG) the composition is skewed to polar residues. A helical membrane pass occupies residues 1481 to 1501 (ALYLAGLAGAGLAALGVWAWL).

The protein in the N-terminal section; belongs to the glycosyltransferase 2 family. In the C-terminal section; belongs to the AcsB/BcsB family.

The protein localises to the cell inner membrane. The catalysed reaction is [(1-&gt;4)-beta-D-glucosyl](n) + UDP-alpha-D-glucose = [(1-&gt;4)-beta-D-glucosyl](n+1) + UDP + H(+). Its pathway is glycan metabolism; bacterial cellulose biosynthesis. This chain is Putative cellulose synthase 2 (bcsABII-A), found in Komagataeibacter xylinus (Gluconacetobacter xylinus).